Here is a 175-residue protein sequence, read N- to C-terminus: MFDIGWSELVLIGVVALIAIGPKELPGVLRMVGQWMGKARKMAAEFQGQFQEAMREAEMADLKKSFDEVKEAASGFAGNNLMTSLQKDVSDALRVDALDKPAETSSTTAIEAPATSSEALTTPTTPEAPTPETFVEAEAHAAVNEPLAITREVEQAPVVAQDTAPSEAIKDAKAS.

Residues 1 to 21 (MFDIGWSELVLIGVVALIAIG) traverse the membrane as a helical segment. Disordered regions lie at residues 100–132 (KPAE…PTPE) and 155–175 (QAPV…AKAS). Residues 111-132 (EAPATSSEALTTPTTPEAPTPE) are compositionally biased toward low complexity.

The protein belongs to the TatB family. In terms of assembly, the Tat system comprises two distinct complexes: a TatABC complex, containing multiple copies of TatA, TatB and TatC subunits, and a separate TatA complex, containing only TatA subunits. Substrates initially bind to the TatABC complex, which probably triggers association of the separate TatA complex to form the active translocon.

It localises to the cell inner membrane. In terms of biological role, part of the twin-arginine translocation (Tat) system that transports large folded proteins containing a characteristic twin-arginine motif in their signal peptide across membranes. Together with TatC, TatB is part of a receptor directly interacting with Tat signal peptides. TatB may form an oligomeric binding site that transiently accommodates folded Tat precursor proteins before their translocation. This Bradyrhizobium diazoefficiens (strain JCM 10833 / BCRC 13528 / IAM 13628 / NBRC 14792 / USDA 110) protein is Sec-independent protein translocase protein TatB.